Here is a 131-residue protein sequence, read N- to C-terminus: mRNA stability protein IGO2 (131 aa).

Polar residues predominate over residues 1–13; that stretch reads MSEDLSPTSSRVD. Residues 1 to 26 are disordered; the sequence is MSEDLSPTSSRVDLSNPHGFTKEGVD. S2 bears the N-acetylserine mark. 4 positions are modified to phosphoserine: S6, S63, S108, and S119. The interval 81–131 is disordered; the sequence is VNNSSNNLPVTNPSGLRESIIRRRMSSSSGGDSISRQGSISSGPPPRSPNK. Low complexity predominate over residues 106–122; it reads SSSSGGDSISRQGSISS.

It belongs to the endosulfine family. In terms of processing, phosphorylated by RIM15.

It localises to the cytoplasm. The protein localises to the nucleus. Functionally, required for TORC1 to properly control gene expression and chronological life span. Plays an essential role in initiation of the G0 program by preventing the degradation of specific nutrient-regulated mRNAs via the 5'-3' mRNA decay pathway. The protein is mRNA stability protein IGO2 (IGO2) of Saccharomyces cerevisiae (strain ATCC 204508 / S288c) (Baker's yeast).